The primary structure comprises 658 residues: Zinc finger protein 135 (658 aa).

One can recognise a KRAB domain in the interval Val-14–Pro-85. Residues Leu-171 to Arg-196 form a disordered region. 16 C2H2-type zinc fingers span residues Tyr-214–His-236, Tyr-242–His-264, Tyr-270–His-292, Tyr-298–His-320, Tyr-326–His-348, Tyr-354–His-376, Tyr-382–His-404, Tyr-410–His-432, Tyr-438–His-460, Tyr-466–His-488, Tyr-494–His-516, Tyr-522–His-544, Tyr-550–His-572, Tyr-578–His-600, Tyr-606–His-628, and Tyr-634–His-656.

The protein belongs to the krueppel C2H2-type zinc-finger protein family.

The protein localises to the nucleus. Functionally, plays a role in the regulation of cell morphology and cytoskeletal organization. May be involved in transcriptional regulation. This is Zinc finger protein 135 (ZNF135) from Homo sapiens (Human).